The chain runs to 376 residues: Carbohydrate sulfotransferase 14 (376 aa).

At 1–39 the chain is on the cytoplasmic side; the sequence is MFPRPLTPLAAPNGAEPLGRALRRAPLGRARAGLGGPPL. The helical; Signal-anchor for type II membrane protein transmembrane segment at 40 to 60 threads the bilayer; the sequence is LLPSMLMFAVIVASSGLLLMI. At 61–376 the chain is on the lumenal side; that stretch reads ERGILAEMKP…PNVTKEACQQ (316 aa). An N-linked (GlcNAc...) asparagine glycan is attached at asparagine 110. 3'-phosphoadenylyl sulfate contacts are provided by residues 155 to 161 and 213 to 221; these read PKVACSN and REPLERLLS. A glycan (N-linked (GlcNAc...) asparagine) is linked at asparagine 368.

Belongs to the sulfotransferase 2 family. As to expression, widely expressed. Expressed at high level in pituitary gland, placenta, uterus and thyroid.

It localises to the golgi apparatus membrane. The enzyme catalyses dermatan + n 3'-phosphoadenylyl sulfate = dermatan 4'-sulfate + n adenosine 3',5'-bisphosphate + n H(+). Functionally, catalyzes the transfer of sulfate to position 4 of the N-acetylgalactosamine (GalNAc) residue of dermatan sulfate. Plays a pivotal role in the formation of 4-0-sulfated IdoA blocks in dermatan sulfate. Transfers sulfate to the C-4 hydroxyl of beta1,4-linked GalNAc that is substituted with an alpha-linked iduronic acid (IdoUA) at the C-3 hydroxyl. Transfers sulfate more efficiently to GalNAc residues in -IdoUA-GalNAc-IdoUA- than in -GlcUA-GalNAc-GlcUA-sequences. Has preference for partially desulfated dermatan sulfate. Addition of sulfate to GalNAc may occur immediately after epimerization of GlcUA to IdoUA. Appears to have an important role in the formation of the cerebellar neural network during postnatal brain development. This chain is Carbohydrate sulfotransferase 14 (CHST14), found in Homo sapiens (Human).